The sequence spans 188 residues: Transmembrane protein 160 (188 aa).

A mitochondrion-targeting transit peptide spans 1-96; that stretch reads MGGGWWWARV…ISFMQSDMGR (96 aa). The interval 21–53 is disordered; sequence SLQPPQRPRSGGARGSFAPGHGPRAGASPPPVS. Phosphoserine is present on S48. A run of 2 helical transmembrane segments spans residues 102–122 and 135–155; these read FFLLGGLCVVWGGASYAVGLA and AAAGVGAVLAASLLWACAVGL. The tract at residues 168-188 is disordered; the sequence is PEDDGAASTEGPDEAGRPPPE.

Belongs to the TMEM160 family. As to expression, expressed in peripheral sensory neurons of dorsal root ganglia (DRG).

It is found in the mitochondrion inner membrane. This is Transmembrane protein 160 from Mus musculus (Mouse).